Here is a 472-residue protein sequence, read N- to C-terminus: MTERAQSPTAADCRPYEVNRAMYPQAAGLDGLGGASLQFAHGMLQDPSLIFNKAHFNGITPATAQTFFPFSGDFKTNDLQGGDFTQPKHWYPFAAPEFTGQVAGATAATQPANISPPIGETREQIKMPSEVKTEKDVEEYGNEENKPPSQYHLTAGTSSIPTGVNYYTPWNPNFWPGLSQITAQANISQAPPTPSASSPSLSPSPPGNGFGSPGFFSGGTAQNIPSAQAQSAPRSSGSSSGGCSNSEEEETLTTEDLEQFAKELKHKRITLGFTQADVGLALGNLYGKMFSQTTICRFEALQLSFKNMCKLKPLLQRWLNEAENSENPQDMYKIERVFVDTRKRKRRTSLEGTVRSALESYFVKCPKPNTLEITHISDDLGLERDVVRVWFCNRRQKGKRLALPFDDECVEAQYYEQSPPPPPHMGGTVLPGQGYPGPAHPGGAPALYMPSLHRPDVFKNGFHPGLVGHLNS.

Disordered regions lie at residues 127 to 154 (MPSEVKTEKDVEEYGNEENKPPSQYHLT) and 187 to 255 (ISQA…LTTE). Polar residues predominate over residues 220–234 (TAQNIPSAQAQSAPR). Positions 235–245 (SSGSSSGGCSN) are enriched in low complexity. Residues 246 to 255 (SEEEETLTTE) show a composition bias toward acidic residues. The POU-specific domain occupies 249 to 323 (EETLTTEDLE…LLQRWLNEAE (75 aa)). Residues 343 to 402 (KRKRRTSLEGTVRSALESYFVKCPKPNTLEITHISDDLGLERDVVRVWFCNRRQKGKRLA) constitute a DNA-binding region (homeobox).

This sequence belongs to the POU transcription factor family. Class-7 subfamily.

It is found in the nucleus. Functionally, involved in early development of embryos, especially in the process of gastrulation. May play an important role in establishing and specifying rhombomeric segments. Seems to be required to maintain the cells in a highly undifferentiated state. In contrast to POU2, T-POU2 lacks DNA-binding activity because of its incomplete pou domain structure. Overexpression of POU2 does not have any effect on development, whereas overexpression of t-POU2 causes developmental retardation or arrest before gastrulation. This chain is POU domain, class 5, transcription factor 1 (pou5f1), found in Danio rerio (Zebrafish).